The sequence spans 46 residues: Acetylajmalan esterase (46 aa).

Asparagine 39 carries N-linked (GlcNAc...) asparagine glycosylation.

It belongs to the 'GDSL' lipolytic enzyme family.

It carries out the reaction 17-O-acetylajmaline + H2O = ajmaline + acetate + H(+). It catalyses the reaction 17-O-acetylnorajmaline + H2O = norajmaline + acetate + H(+). Functionally, deacetylates 17-O-acetylajmaline and 17-O-acetylnorajmaline, but is inactive toward other acetylated alkaloids. In Rauvolfia verticillata (Common devil-pepper), this protein is Acetylajmalan esterase.